A 148-amino-acid polypeptide reads, in one-letter code: Large ribosomal subunit protein bL9 (148 aa).

This sequence belongs to the bacterial ribosomal protein bL9 family.

Binds to the 23S rRNA. This chain is Large ribosomal subunit protein bL9, found in Geobacter metallireducens (strain ATCC 53774 / DSM 7210 / GS-15).